Here is a 210-residue protein sequence, read N- to C-terminus: MKLKFCGFTSIEDVTAASQLPIDAIGFIHYEKSKSHQTITQIKKLASAVPEHIDKVCVVVNPDLTTIEHVLSNTPINTIQLHGTESIDFIQEIKKKYSSIKITKALAADENIIQNINKYKGFVDLFIIDTPSVSYGGTGQTYDWTILKHIKDIPYLIAGGINSENIQTVNQLKLSHQGFDLASGIEVNGRKDIEKMTAIVNIVKGDRENE.

This sequence belongs to the TrpF family.

The enzyme catalyses N-(5-phospho-beta-D-ribosyl)anthranilate = 1-(2-carboxyphenylamino)-1-deoxy-D-ribulose 5-phosphate. It functions in the pathway amino-acid biosynthesis; L-tryptophan biosynthesis; L-tryptophan from chorismate: step 3/5. This chain is N-(5'-phosphoribosyl)anthranilate isomerase, found in Staphylococcus aureus (strain bovine RF122 / ET3-1).